We begin with the raw amino-acid sequence, 898 residues long: Netrin receptor UNC5A (898 aa).

Residues 1–25 (MAVRPGLWPALLGIVLTAWLRGSGA) form the signal peptide. Topologically, residues 26 to 361 (QQSATVANPV…TSSGPEDVAL (336 aa)) are extracellular. One can recognise an Ig-like domain in the interval 44-141 (PHFLVEPEDV…SGTTKSQKAY (98 aa)). Cystine bridges form between Cys-65–Cys-126, Cys-77–Cys-124, and Cys-170–Cys-221. N-linked (GlcNAc...) asparagine glycans are attached at residues Asn-107 and Asn-218. The Ig-like C2-type domain occupies 155-234 (PLAKEVSLEQ…NIVARRRSAS (80 aa)). TSP type-1 domains follow at residues 242 to 296 (NGGW…TLCP) and 298 to 350 (DGSW…DLCL). 3 C-linked (Man) tryptophan glycosylation sites follow: Trp-245, Trp-248, and Trp-251. Intrachain disulfides connect Cys-254-Cys-291, Cys-258-Cys-295, and Cys-269-Cys-281. C-linked (Man) tryptophan glycans are attached at residues Trp-301 and Trp-304. 3 disulfide bridges follow: Cys-310–Cys-344, Cys-314–Cys-349, and Cys-322–Cys-334. The N-linked (GlcNAc...) asparagine glycan is linked to Asn-343. A helical transmembrane segment spans residues 362-382 (YIGLVAVAVCLILLLLVLVLI). Topologically, residues 383–898 (YCRKKEGLDS…GLFTVSEAEC (516 aa)) are cytoplasmic. Residues 497–640 (NMAYGTFNFL…LGRFALVGEA (144 aa)) enclose the ZU5 domain. An interaction with DCC region spans residues 661 to 679 (SLEYNIRVYCLHDTHDALK). The Death domain occupies 817-897 (QKIITSLDPP…AGLFTVSEAE (81 aa)).

Belongs to the unc-5 family. Homodimer and homooligomer. Interacts with the cytoplasmic part of DCC. Interacts with MAGED1. Interacts with PRKCABP, possibly mediating some interaction with PKC. Interacts (via extracellular domain) with FLRT2 (via extracellular domain). Interacts (via extracellular domain) with FLRT3 (via extracellular domain). In terms of processing, phosphorylated on cytoplasmic tyrosine residues. Phosphorylated by PKC in vitro. Post-translationally, proteolytically cleaved by caspases during apoptosis. The cleavage does not take place when the receptor is associated with netrin ligand. Its cleavage by caspases is required to induce apoptosis. The two extracellular TSRs of UNC5A contain WxxWxxWxxC motifs that can be C-mannosylated on all tryptophans. DPY19L1 preferentially mannosylates the first two tryptophans and DPY19L3 prefers the third. C-mannosylation by DPY19L1 is required for transport of UNC5A from the endoplasmic reticulum to the cell surface. Restricted to central nervous system.

It is found in the cell membrane. Its subcellular location is the membrane raft. It localises to the cell projection. The protein localises to the neuron projection. In terms of biological role, receptor for netrin required for axon guidance. Functions in the netrin signaling pathway and promotes neurite outgrowth in response to NTN1. Mediates axon repulsion of neuronal growth cones in the developing nervous system in response to netrin. Axon repulsion in growth cones may be mediated by its association with DCC that may trigger signaling for repulsion. It also acts as a dependence receptor required for apoptosis induction when not associated with netrin ligand. This is Netrin receptor UNC5A (Unc5a) from Mus musculus (Mouse).